The primary structure comprises 326 residues: Malate dehydrogenase (326 aa).

11–17 (GAAGQIG) contacts NAD(+). Substrate contacts are provided by R92 and R98. NAD(+)-binding positions include N105, Q112, and 129 to 131 (VGN). Substrate contacts are provided by N131 and R162. H187 serves as the catalytic Proton acceptor.

This sequence belongs to the LDH/MDH superfamily. MDH type 2 family.

The catalysed reaction is (S)-malate + NAD(+) = oxaloacetate + NADH + H(+). Catalyzes the reversible oxidation of malate to oxaloacetate. This chain is Malate dehydrogenase, found in Leptospira interrogans serogroup Icterohaemorrhagiae serovar Lai (strain 56601).